A 549-amino-acid polypeptide reads, in one-letter code: MLPDKKAFKESLKALKKHVTQDKVCDIRQHFSEDEQRFARLSIRLDDLLFDFSKCGVTLDTLQLLDNLAIAADVLGKREAMFSGKIINTTEKRSVLHIALRLAADKVFILNDRDIVQDIQSVLARMVKFSKMIRDGSYKGYSGERITDIVNIGIGGSDLGPAMVTSALKPYHDGPHCHFVSSVDSAHITDILADLNPATTLFIIASKTFTTTETIENARVARQWIHSHLGENAVGVHFVAVSSAIDKAIEFGIDSSRIFEFWDWVGGRYSIWSAIGLVVMLAIGDQNFRQFLEGARQMDQHFKDTPLHQNIPIRFALLGFWHRVICGYSSRAIVPYEQRLVRFPAYLQQLDMESNGKHVSLEGRPITFSTGPVVWGDSGSNGQHAFFQFLHQGTDIVPVEFILFVKGHEPNLNHMHDILVANCLAQSEALMKGRSHEDVYHTLMNDGGESDEADNLAFHKSLQGNRPSIMLIQDLLTPFTLGRLMALYEHRIFVEGILMNINSFDQWGVELGKEFANELLPVIRGENEADNRDGSTLGLLKHIQNRYVE.

Glu353 serves as the catalytic Proton donor. Residues His384 and Lys513 contribute to the active site.

Belongs to the GPI family.

It localises to the cytoplasm. The catalysed reaction is alpha-D-glucose 6-phosphate = beta-D-fructose 6-phosphate. It participates in carbohydrate biosynthesis; gluconeogenesis. Its pathway is carbohydrate degradation; glycolysis; D-glyceraldehyde 3-phosphate and glycerone phosphate from D-glucose: step 2/4. Functionally, catalyzes the reversible isomerization of glucose-6-phosphate to fructose-6-phosphate. This Bartonella bacilliformis (strain ATCC 35685 / KC583 / Herrer 020/F12,63) protein is Glucose-6-phosphate isomerase.